Consider the following 444-residue polypeptide: MKNLDINTFDNIEDIPLGSSEQDPYDFFTLSDRNVMNSDMKKNIVQWNSRYSYNQLKNKDSLIMFLVEIFRSLFVSNCIDKNIDNVLLSIEEMFIDHYYNPQHSRLKYLIDDVGIFFTKLPITKAFHTYNKKYRITKRLYAPPTFNEVRHILNLAQILSLEEGLDLLTFDADETLYPDGHDFNDEVLASYISCLLKKMNIAIVTAASYNNDAEKYQKRLENLLKYFSKHNIKDGSYKNFYVMGGESNYLFKCNEEATLYSVPENEWRHYKKFVDYDTVQEILNISEKCLEKVIKDFGLCAQIQRKEKSIGLVPNKIPSLNIKNEQKNYMIKYEVLEEAVIRIKKEIIKNKITAPYCAFNGGQDLWVDVGNKAEGLLILQKLLKIQKKKCCHIGDQFLHSGNDFPTRFCSLTLWVSNPQETKACLKSIMHLNIKSFIPEVLYENQ.

Positions 132 and 150 each coordinate ATP. The active-site Nucleophile is Asp-170. IMP is bound by residues Asp-170, Asp-172, Asp-178, Thr-204, Ser-207, Ser-308, Asp-363, and Lys-371. 2 residues coordinate Mg(2+): Asp-170 and Asp-172. Residue Asp-172 is the Proton donor of the active site. Asp-394 is a Mg(2+) binding site.

This sequence belongs to the ISN1 family. In terms of assembly, homotetramer. It depends on Mg(2+) as a cofactor.

Its subcellular location is the cytoplasm. It carries out the reaction IMP + H2O = inosine + phosphate. Its activity is regulated as follows. At physiological pH, allosterically activated by ATP. ATP binding is a prerequisite to magnesium and substrate binding. ATP binds to 2 of the subunits in the homotetramer inducing a closure of these 2 subunits and the release of the C-terminal loop, thereby activating the enzyme. In this conformation, the enzyme can bind IMP and magnesium which ultimately leads to the release of ATP. At pH 5, ATP does not have an allosteric role and is dispensable for magnesium and substrate binding. Inhibited by phosphocholine and D-myo-inositol-4-phosphate. Its function is as follows. Specifically, catalyzes the dephosphorylation of inosine monophosphate (IMP) into inosine. By dephosphorylating IMP, plays a role in the purine salvage pathway. Does not have phosphotransferase activity with IMP as phosphate donor and adenosine as phosphate acceptor. The chain is IMP-specific 5'-nucleotidase 1 from Plasmodium falciparum (isolate 3D7).